The sequence spans 102 residues: Glycoprotein 24A (102 aa).

This sequence belongs to the csb family. O-glycosylated.

The protein resides in the cell surface. In terms of biological role, cell-cell adhesion during early development. This chain is Glycoprotein 24A (csbA), found in Dictyostelium discoideum (Social amoeba).